The following is a 595-amino-acid chain: Glutamyl-tRNA(Gln) amidotransferase subunit B, mitochondrial (595 aa).

The N-terminal 72 residues, 1 to 72, are a transit peptide targeting the mitochondrion; sequence MPRLWYSRYL…RAKSQSRNGR (72 aa).

This sequence belongs to the GatB/GatE family. GatB subfamily. Subunit of the heterotrimeric GatCAB amidotransferase (AdT) complex, composed of A, B and C subunits.

The protein resides in the mitochondrion. The catalysed reaction is L-glutamyl-tRNA(Gln) + L-glutamine + ATP + H2O = L-glutaminyl-tRNA(Gln) + L-glutamate + ADP + phosphate + H(+). Functionally, allows the formation of correctly charged Gln-tRNA(Gln) through the transamidation of misacylated Glu-tRNA(Gln) in the mitochondria. The reaction takes place in the presence of glutamine and ATP through an activated gamma-phospho-Glu-tRNA(Gln). This is Glutamyl-tRNA(Gln) amidotransferase subunit B, mitochondrial from Talaromyces marneffei (strain ATCC 18224 / CBS 334.59 / QM 7333) (Penicillium marneffei).